The following is a 553-amino-acid chain: MLSVRVAAAVARALPRRAGLVSKNALGSSFVGARNLHASNTRLQKTGTAEMSSILEERILGADTSVDLEETGRVLSIGDGIARVHGLRNVQAEEMVEFSSGLKGMSLNLEPDNVGVVVFGNDKLIKEGDVVKRTGAIVDVPVGEELLGRVVDALGNAIDGKGPIGSKTRRRVGLKAPGIIPRISVREPMQTGIKAVDSLVPIGRGQRELIIGDRQTGKTSIAIDTIINQKRFNDGTDEKKKLYCIYVAIGQKRSTVAQLVKRLTDADAMKYTIVVSATASDAAPLQYLAPYSGCSMGEYFRDNGKHALIIYDDLSKQAVAYRQMSLLLRRPPGREAYPGDVFYLHSRLLERAAKMNDSFGGGSLTALPVIETQAGDVSAYIPTNVISITDGQIFLETELFYKGIRPAINVGLSVSRVGSAAQTRAMKQVAGTMKLELAQYREVAAFAQFGSDLDAATQQLLSRGVRLTELLKQGQYSPMAIEEQVAVIYAGVRGYLDKLEPSKITKFENAFLSHVISQHQSLLGNIRSDGKISEQSDAKLKEIVTNFLAGFEP.

The N-terminal 43 residues, 1-43 (MLSVRVAAAVARALPRRAGLVSKNALGSSFVGARNLHASNTRL), are a transit peptide targeting the mitochondrion. Phosphoserine is present on residues serine 53 and serine 65. Residue serine 76 is modified to Phosphoserine; alternate. Serine 76 carries O-linked (GlcNAc) serine; alternate glycosylation. Residue serine 106 is modified to Phosphoserine. Residues lysine 123, lysine 126, and lysine 132 each carry the N6-acetyllysine modification. Residue threonine 134 is modified to Phosphothreonine. Lysine 161 is modified (N6-acetyllysine; alternate). The residue at position 161 (lysine 161) is an N6-succinyllysine; alternate. Serine 166 is subject to Phosphoserine. Residue lysine 167 is modified to N6-acetyllysine; alternate. Lysine 167 carries the N6-succinyllysine; alternate modification. Position 184 is a phosphoserine (serine 184). Arginine 204 carries the omega-N-methylarginine modification. The ATP site is built by glutamine 215, glycine 217, lysine 218, threonine 219, and serine 220. Threonine 219 is a binding site for Mg(2+). N6-acetyllysine; alternate occurs at positions 230 and 239. N6-succinyllysine; alternate is present on residues lysine 230 and lysine 239. Residue lysine 240 is modified to N6-acetyllysine. An N6-acetyllysine; alternate mark is found at lysine 261 and lysine 305. Residues lysine 261 and lysine 305 each carry the N6-succinyllysine; alternate modification. Aspartate 312 is a binding site for Mg(2+). Lysine 427 carries the N6-acetyllysine; alternate modification. Lysine 427 carries the N6-succinyllysine; alternate modification. Lysine 434 bears the N6-acetyllysine mark. 2 residues coordinate ATP: glutamine 473 and glutamine 475. Lysine 498 and lysine 506 each carry N6-acetyllysine; alternate. An N6-succinyllysine; alternate mark is found at lysine 498 and lysine 506. A Phosphoserine modification is found at serine 521. An N6-acetyllysine; alternate mark is found at lysine 531 and lysine 539. N6-succinyllysine; alternate is present on residues lysine 531 and lysine 539. Lysine 541 is subject to N6-acetyllysine.

The protein belongs to the ATPase alpha/beta chains family. In terms of assembly, homotrimer. Component of the ATP synthase complex composed at least of ATP5F1A/subunit alpha, ATP5F1B/subunit beta, ATP5MC1/subunit c (homooctomer), MT-ATP6/subunit a, MT-ATP8/subunit 8, ATP5ME/subunit e, ATP5MF/subunit f, ATP5MG/subunit g, ATP5MK/subunit k, ATP5MJ/subunit j, ATP5F1C/subunit gamma, ATP5F1D/subunit delta, ATP5F1E/subunit epsilon, ATP5PF/subunit F6, ATP5PB/subunit b, ATP5PD/subunit d, ATP5PO/subunit OSCP. ATP synthase complex consists of a soluble F(1) head domain (subunits alpha(3) and beta(3)) - the catalytic core - and a membrane F(0) domain - the membrane proton channel (subunits c, a, 8, e, f, g, k and j). These two domains are linked by a central stalk (subunits gamma, delta, and epsilon) rotating inside the F1 region and a stationary peripheral stalk (subunits F6, b, d, and OSCP). Interacts with ATPAF2. Interacts with HRG; the interaction occurs on the surface of T-cells and alters the cell morphology when associated with concanavalin (in vitro). Interacts with PLG (angiostatin peptide); the interaction inhibits most of the angiogenic properties of angiostatin. Interacts with BLOC1S1. Interacts with BCL2L1 isoform BCL-X(L); the interaction mediates the association of BCL2L1 isoform BCL-X(L) with the mitochondrial membrane F(1)F(0) ATP synthase and enhances neurons metabolic efficiency. Interacts with CLN5 and PPT1. Interacts with S100A1; this interaction increases F1-ATPase activity. Interacts with ABCB7; this interaction allows the regulation of cellular iron homeostasis and cellular reactive oxygen species (ROS) levels in cardiomyocytes. In terms of processing, acetylated on lysine residues. BLOC1S1 is required for acetylation. Acetylation of Lys-132, Lys-230 and Lys-498 is observed in liver mitochondria from fasted mice but not from fed mice.

It localises to the mitochondrion inner membrane. It is found in the cell membrane. Its function is as follows. Subunit alpha, of the mitochondrial membrane ATP synthase complex (F(1)F(0) ATP synthase or Complex V) that produces ATP from ADP in the presence of a proton gradient across the membrane which is generated by electron transport complexes of the respiratory chain. ATP synthase complex consist of a soluble F(1) head domain - the catalytic core - and a membrane F(1) domain - the membrane proton channel. These two domains are linked by a central stalk rotating inside the F(1) region and a stationary peripheral stalk. During catalysis, ATP synthesis in the catalytic domain of F(1) is coupled via a rotary mechanism of the central stalk subunits to proton translocation. In vivo, can only synthesize ATP although its ATP hydrolase activity can be activated artificially in vitro. With the catalytic subunit beta (ATP5F1B), forms the catalytic core in the F(1) domain. Subunit alpha does not bear the catalytic high-affinity ATP-binding sites. The sequence is that of ATP synthase F(1) complex subunit alpha, mitochondrial from Mus musculus (Mouse).